A 260-amino-acid polypeptide reads, in one-letter code: MKVRTLTAIIALLIFLPILLKGGLILMLFAFLLALIALKELLNMNMIKFLSIPGLISALALIIIMLPQDAGEWVQVIQLKGLIAMSFIVLSYTVLSKNRFSFMDAAFCLMSVAYVGIGFMYFYETRSEGLRYILFAFLIVWLTDTGAYIFGRLMGKHKLWPVISPNKTIEGFFGGILCSILVPLVMQMFVDLHMNIWLLLLVTIVLSMFGQLGDLVESGFKRHFGVKDSGRILPGHGGILDRFDSFMFVLPLLNILLIQT.

Transmembrane regions (helical) follow at residues 9–29 (IIAL…LMLF), 46–66 (MIKF…IIML), 70–90 (AGEW…FIVL), 102–122 (FMDA…FMYF), 130–150 (LRYI…AYIF), 172–192 (FFGG…FVDL), and 196–216 (IWLL…GDLV).

This sequence belongs to the CDS family.

It localises to the cell membrane. The enzyme catalyses a 1,2-diacyl-sn-glycero-3-phosphate + CTP + H(+) = a CDP-1,2-diacyl-sn-glycerol + diphosphate. It functions in the pathway phospholipid metabolism; CDP-diacylglycerol biosynthesis; CDP-diacylglycerol from sn-glycerol 3-phosphate: step 3/3. In Staphylococcus epidermidis (strain ATCC 35984 / DSM 28319 / BCRC 17069 / CCUG 31568 / BM 3577 / RP62A), this protein is Phosphatidate cytidylyltransferase (cdsA).